Here is a 99-residue protein sequence, read N- to C-terminus: MAQGQRKFQARKPAKSKTAATASEKNRGPRKGGRVIAPKKARVVQQQKLKKNLEVGIRKKIEHDVVMKASSSLPKRLALLKAPAKKKGAAAATSSKTPS.

A disordered region spans residues 1 to 37; it reads MAQGQRKFQARKPAKSKTAATASEKNRGPRKGGRVIA. Over residues 28-37 the composition is skewed to basic residues; it reads GPRKGGRVIA.

This sequence belongs to the UPF0390 family.

In terms of biological role, may have a potential role in hypercalcemia of malignancy. This Pongo abelii (Sumatran orangutan) protein is Leydig cell tumor 10 kDa protein homolog.